Reading from the N-terminus, the 399-residue chain is Protein TWIN LOV 1 (399 aa).

In terms of domain architecture, PAS 1 spans 26 to 97; sequence LWIKEALEEL…MEIREAIREE (72 aa). Residues 98–153 enclose the PAC 1 domain; the sequence is RSVQVSLLNYRKSGSPFWMLFHMCPVFGKDDGKVTNFVAVQVPISGREHHRKKLRN. In terms of domain architecture, PAS 2 spans 249–320; sequence SLVISLGRIK…EMKECILKGQ (72 aa). Cysteine 296 is subject to S-4a-FMN cysteine. The PAC 2 domain occupies 320-376; that stretch reads QSCTVQILNYSNRKDKSSFWNLLHISPVRNASGKTAYFVGVQVEASCRNTEIKELRP.

In terms of assembly, interacts with VTC2, VTC5 and BLH10. In terms of processing, FMN binds covalently to cysteine after exposure to blue light and is reversed in the dark.

The sequence is that of Protein TWIN LOV 1 (TLP1) from Arabidopsis thaliana (Mouse-ear cress).